A 316-amino-acid chain; its full sequence is Probable prolyl 4-hydroxylase 7 (316 aa).

The Cytoplasmic segment spans residues 1–4 (MDSR). A helical; Signal-anchor for type II membrane protein transmembrane segment spans residues 5 to 24 (IFLAFSLCFLFTLPLISSAP). Topologically, residues 25-316 (NRFLTRSSNT…CRKSCKACSS (292 aa)) are lumenal. N-linked (GlcNAc...) asparagine glycosylation occurs at Asn-96. Positions 139-261 (NGESMQILHY…KWSATRWIHV (123 aa)) constitute a Fe2OG dioxygenase domain. The Fe cation site is built by His-157 and Asp-159. The N-linked (GlcNAc...) asparagine glycan is linked to Asn-233. His-242 is a Fe cation binding site. 2-oxoglutarate is bound at residue Lys-252. A ShKT domain is found at 274-314 (CMDENVSCEKWAKAGECQKNPTYMVGSDKDHGYCRKSCKAC). Cystine bridges form between Cys-274-Cys-314, Cys-281-Cys-307, and Cys-290-Cys-311. An N-linked (GlcNAc...) asparagine glycan is attached at Asn-278.

Belongs to the P4HA family. Requires Fe(2+) as cofactor. L-ascorbate is required as a cofactor.

It is found in the endoplasmic reticulum membrane. It catalyses the reaction L-prolyl-[collagen] + 2-oxoglutarate + O2 = trans-4-hydroxy-L-prolyl-[collagen] + succinate + CO2. In terms of biological role, catalyzes the post-translational formation of 4-hydroxyproline in -Xaa-Pro-Gly- sequences in proline-rich peptide sequences of plant glycoproteins and other proteins. Hydroxyprolines are important constituent of many plant cell wall glycoproteins such as extensins, hydroxyproline-rich glycoproteins, lectins and arabinogalactan proteins. The chain is Probable prolyl 4-hydroxylase 7 from Arabidopsis thaliana (Mouse-ear cress).